The chain runs to 219 residues: 23.6 kDa heat shock protein, mitochondrial (219 aa).

Residues 1–29 constitute a mitochondrion transit peptide; the sequence is MALARQCLSKRLAAGCALARPLHAASPVA. The 116-residue stretch at 104-219 folds into the sHSP domain; that stretch reads QVAETLTRPL…KRSVTEVKVR (116 aa).

The protein belongs to the small heat shock protein (HSP20) family. May form oligomeric structures.

Its subcellular location is the mitochondrion. This chain is 23.6 kDa heat shock protein, mitochondrial (HSP23.6), found in Oryza sativa subsp. japonica (Rice).